The sequence spans 292 residues: 4-hydroxy-tetrahydrodipicolinate synthase (292 aa).

Residue Thr-45 participates in pyruvate binding. Tyr-133 acts as the Proton donor/acceptor in catalysis. The Schiff-base intermediate with substrate role is filled by Lys-161. A pyruvate-binding site is contributed by Ile-203.

Belongs to the DapA family. In terms of assembly, homotetramer; dimer of dimers.

Its subcellular location is the cytoplasm. The enzyme catalyses L-aspartate 4-semialdehyde + pyruvate = (2S,4S)-4-hydroxy-2,3,4,5-tetrahydrodipicolinate + H2O + H(+). The protein operates within amino-acid biosynthesis; L-lysine biosynthesis via DAP pathway; (S)-tetrahydrodipicolinate from L-aspartate: step 3/4. Catalyzes the condensation of (S)-aspartate-beta-semialdehyde [(S)-ASA] and pyruvate to 4-hydroxy-tetrahydrodipicolinate (HTPA). This is 4-hydroxy-tetrahydrodipicolinate synthase from Acidiphilium cryptum (strain JF-5).